Consider the following 318-residue polypeptide: L-lactate dehydrogenase (318 aa).

Residues Val-14, Asp-35, Lys-40, and Tyr-66 each contribute to the NAD(+) site. Substrate is bound by residues Arg-89 and 121 to 124; that span reads NPVD. Position 144 (Ser-144) interacts with NAD(+). 149-152 contributes to the substrate binding site; that stretch reads DTAR. The active-site Proton acceptor is His-176. At Tyr-220 the chain carries Phosphotyrosine. Thr-229 contacts substrate.

The protein belongs to the LDH/MDH superfamily. LDH family. As to quaternary structure, homotetramer.

It localises to the cytoplasm. It catalyses the reaction (S)-lactate + NAD(+) = pyruvate + NADH + H(+). The protein operates within fermentation; pyruvate fermentation to lactate; (S)-lactate from pyruvate: step 1/1. In terms of biological role, catalyzes the conversion of lactate to pyruvate. This is L-lactate dehydrogenase from Staphylococcus haemolyticus (strain JCSC1435).